A 307-amino-acid chain; its full sequence is Ribosomal protein L11 methyltransferase (307 aa).

S-adenosyl-L-methionine is bound by residues T162, G183, D205, and N244.

Belongs to the methyltransferase superfamily. PrmA family.

The protein localises to the cytoplasm. It catalyses the reaction L-lysyl-[protein] + 3 S-adenosyl-L-methionine = N(6),N(6),N(6)-trimethyl-L-lysyl-[protein] + 3 S-adenosyl-L-homocysteine + 3 H(+). In terms of biological role, methylates ribosomal protein L11. The chain is Ribosomal protein L11 methyltransferase from Bordetella parapertussis (strain 12822 / ATCC BAA-587 / NCTC 13253).